The sequence spans 926 residues: Thyroid peroxidase (926 aa).

Residues 1–14 (MGARAVLGVTLAVA) form the signal peptide. The Extracellular portion of the chain corresponds to 19–844 (FFASILRRKD…TCVDAGRLPR (826 aa)). Residue Asn129 is glycosylated (N-linked (GlcNAc...) asparagine). Cys142 and Cys158 are joined by a disulfide. Residue Asp238 coordinates heme b. The Proton acceptor role is filled by His239. Asp240 serves as a coordination point for Ca(2+). Disulfide bonds link Cys259/Cys269 and Cys263/Cys286. Residues Asn277 and Asn307 are each glycosylated (N-linked (GlcNAc...) asparagine). Residues Thr321, Phe323, Asp325, and Ser327 each contribute to the Ca(2+) site. N-linked (GlcNAc...) asparagine glycosylation occurs at Asn342. Residues Glu398 and His493 each coordinate heme b. 7 disulfide bridges follow: Cys596-Cys653, Cys694-Cys719, Cys740-Cys780, Cys766-Cys792, Cys798-Cys812, Cys806-Cys821, and Cys823-Cys836. One can recognise a Sushi domain in the interval 738–793 (DACGFPDPVEDGGFLLCEERGQRVLVFSCRHGFRLRGPAQITCTPRGWDSPPPLCK). The region spanning 794–837 (DINECEDETDPPCHASARCKNTKGGVLCECSDPLVLGEDGRTCV) is the EGF-like; calcium-binding domain. The helical transmembrane segment at 845-869 (ASVVSIALGAVLVCGLAGLAWTVVC) threads the bilayer. Topologically, residues 870-926 (RWTHADARPLLPVGEGEGDGKSPSLPLPGCGNRRDVGAAPALEVEQDLSCGSRGLCE) are cytoplasmic.

This sequence belongs to the peroxidase family. XPO subfamily. In terms of assembly, interacts with DUOX1, DUOX2 and CYBA. Requires Ca(2+) as cofactor. It depends on heme b as a cofactor. Post-translationally, heme is covalently bound through a H(2)O(2)-dependent autocatalytic process. Heme insertion is important for the delivery of protein at the cell surface. Cleaved in its N-terminal part. In terms of processing, N-glycosylated; contains mannose and N-acetylglucosamine.

Its subcellular location is the membrane. The catalysed reaction is 2 iodide + H2O2 + 2 H(+) = diiodine + 2 H2O. It carries out the reaction [thyroglobulin]-L-tyrosine + iodide + H2O2 + H(+) = [thyroglobulin]-3-iodo-L-tyrosine + 2 H2O. It catalyses the reaction [thyroglobulin]-3-iodo-L-tyrosine + iodide + H2O2 + H(+) = [thyroglobulin]-3,5-diiodo-L-tyrosine + 2 H2O. The enzyme catalyses 2 [thyroglobulin]-3,5-diiodo-L-tyrosine + H2O2 = [thyroglobulin]-L-thyroxine + [thyroglobulin]-dehydroalanine + 2 H2O. The catalysed reaction is [thyroglobulin]-3-iodo-L-tyrosine + [thyroglobulin]-3,5-diiodo-L-tyrosine + H2O2 = [thyroglobulin]-3,3',5-triiodo-L-thyronine + [thyroglobulin]-dehydroalanine + 2 H2O. It participates in hormone biosynthesis; thyroid hormone biosynthesis. Its function is as follows. Iodination and coupling of the hormonogenic tyrosines in thyroglobulin to yield the thyroid hormones T(3) and T(4). The chain is Thyroid peroxidase (TPO) from Sus scrofa (Pig).